Reading from the N-terminus, the 235-residue chain is Purine nucleoside phosphorylase DeoD-type (235 aa).

Residue His-4 coordinates a purine D-ribonucleoside. Phosphate contacts are provided by residues Gly-20, Arg-24, Arg-43, and 87–90; that span reads RVGT. Residues Glu-162, 179–181, and 203–204 contribute to the a purine D-ribonucleoside site; these read EME and SD. Catalysis depends on Asp-204, which acts as the Proton donor.

It belongs to the PNP/UDP phosphorylase family. In terms of assembly, homohexamer; trimer of homodimers.

It carries out the reaction a purine D-ribonucleoside + phosphate = a purine nucleobase + alpha-D-ribose 1-phosphate. The catalysed reaction is a purine 2'-deoxy-D-ribonucleoside + phosphate = a purine nucleobase + 2-deoxy-alpha-D-ribose 1-phosphate. Catalyzes the reversible phosphorolytic breakdown of the N-glycosidic bond in the beta-(deoxy)ribonucleoside molecules, with the formation of the corresponding free purine bases and pentose-1-phosphate. The polypeptide is Purine nucleoside phosphorylase DeoD-type (Bacillus cereus (strain B4264)).